Consider the following 130-residue polypeptide: MASVKLASLIVLFATLGMFLTKNVGAASCNGVCSPFEMPPCGSSACRCIPVGLLIGYCRNPSGVFLKGNDEHPNLCESDADCKKKGSGNFCGHYPNPDIEYGWCFASKSEAEDVFSKITPKDLLKSVSTA.

The N-terminal stretch at 1-26 (MASVKLASLIVLFATLGMFLTKNVGA) is a signal peptide. 3 disulfides stabilise this stretch: Cys29-Cys46, Cys33-Cys48, and Cys41-Cys58. 2 consecutive propeptides follow at residues 64–69 (VFLKGN) and 123–130 (LLKSVSTA).

Post-translationally, the C-terminal glycine may be removed from PA1b.

In terms of biological role, PA1b binds to basic 7S globulin (BG) and stimulates its phosphorylation activity. Involved in the signal transduction system to regulate the growth and differentiation as a hormone peptide. Toxic to various insects through binding to a high affinity binding site in the insect gut. In Pisum sativum (Garden pea), this protein is Albumin-1 E.